The following is a 212-amino-acid chain: Ras-related protein Rab-15 (212 aa).

Serine 17, glycine 18, valine 19, glycine 20, lysine 21, threonine 22, cysteine 23, serine 35, serine 39, and threonine 40 together coordinate GTP. Position 22 (threonine 22) interacts with Mg(2+). 2 consecutive short sequence motifs (switch) follow at residues 31-45 (NEFHSSHISTIGVDF) and 63-80 (DTAGQERYQTITKQYYRR). Residues threonine 40 and aspartate 63 each contribute to the Mg(2+) site. GTP contacts are provided by glycine 66, asparagine 121, lysine 122, aspartate 124, serine 151, and alanine 152. A disordered region spans residues 192 to 212 (ELEEDEGKPEGPANSSKTCWC). Residues cysteine 210 and cysteine 212 are each lipidated (S-geranylgeranyl cysteine). Residue cysteine 212 is modified to Cysteine methyl ester.

This sequence belongs to the small GTPase superfamily. Rab family. The GTP bound form of RAB15 interacts with REP15. Interacts (GTP-bound form) with MICAL1, MICAL3, MICALCL, EHBP1 and EHBP1L1. It depends on Mg(2+) as a cofactor.

It is found in the cell membrane. The catalysed reaction is GTP + H2O = GDP + phosphate + H(+). Its activity is regulated as follows. Regulated by guanine nucleotide exchange factors (GEFs) which promote the exchange of bound GDP for free GTP. Regulated by GTPase activating proteins (GAPs) which increase the GTP hydrolysis activity. Inhibited by GDP dissociation inhibitors (GDIs). The small GTPases Rab are key regulators of intracellular membrane trafficking, from the formation of transport vesicles to their fusion with membranes. Rabs cycle between an inactive GDP-bound form and an active GTP-bound form that is able to recruit to membranes different sets of downstream effectors directly responsible for vesicle formation, movement, tethering and fusion. RAB15 may act in concert with RAB3A in regulating aspects of synaptic vesicle membrane flow within the nerve terminal. This is Ras-related protein Rab-15 from Mus musculus (Mouse).